We begin with the raw amino-acid sequence, 255 residues long: Zinc import ATP-binding protein ZnuC 1 (255 aa).

An ABC transporter domain is found at 7-220 (IRLQDVTVKI…PAFINLFGTQ (214 aa)). An ATP-binding site is contributed by 39-46 (GPNGAGKS). The disordered stretch occupies residues 229–255 (HHHHDHHHHTDGTVAAGSECSHGDQHA).

It belongs to the ABC transporter superfamily. Zinc importer (TC 3.A.1.15.5) family. As to quaternary structure, the complex is composed of two ATP-binding proteins (ZnuC), two transmembrane proteins (ZnuB) and a solute-binding protein (ZnuA).

Its subcellular location is the cell inner membrane. The catalysed reaction is Zn(2+)(out) + ATP(in) + H2O(in) = Zn(2+)(in) + ADP(in) + phosphate(in) + H(+)(in). Part of the ABC transporter complex ZnuABC involved in zinc import. Responsible for energy coupling to the transport system. In Hahella chejuensis (strain KCTC 2396), this protein is Zinc import ATP-binding protein ZnuC 1.